A 117-amino-acid polypeptide reads, in one-letter code: Holo-[acyl-carrier-protein] synthase (117 aa).

Residues aspartate 8 and glutamate 55 each coordinate Mg(2+).

Belongs to the P-Pant transferase superfamily. AcpS family. It depends on Mg(2+) as a cofactor.

The protein localises to the cytoplasm. The enzyme catalyses apo-[ACP] + CoA = holo-[ACP] + adenosine 3',5'-bisphosphate + H(+). Functionally, transfers the 4'-phosphopantetheine moiety from coenzyme A to a Ser of acyl-carrier-protein. This chain is Holo-[acyl-carrier-protein] synthase, found in Finegoldia magna (strain ATCC 29328 / DSM 20472 / WAL 2508) (Peptostreptococcus magnus).